Consider the following 150-residue polypeptide: Peptidoglycan-associated lipoprotein (150 aa).

The N-terminal stretch at 1 to 19 (MKKLTKVLLVAGSVAVLAA) is a signal peptide. Cys20 carries the N-palmitoyl cysteine lipid modification. The S-diacylglycerol cysteine moiety is linked to residue Cys20. Residues 37 to 150 (SVQDLQQRYN…SKNRRAVLAY (114 aa)) enclose the OmpA-like domain.

This sequence belongs to the Pal lipoprotein family. As to quaternary structure, the Tol-Pal system is composed of five core proteins: the inner membrane proteins TolA, TolQ and TolR, the periplasmic protein TolB and the outer membrane protein Pal. They form a network linking the inner and outer membranes and the peptidoglycan layer.

The protein localises to the cell outer membrane. In terms of biological role, part of the Tol-Pal system, which plays a role in outer membrane invagination during cell division and is important for maintaining outer membrane integrity. The polypeptide is Peptidoglycan-associated lipoprotein (Pasteurella multocida (strain Pm70)).